Consider the following 317-residue polypeptide: Transaldolase (317 aa).

Lys-126 functions as the Schiff-base intermediate with substrate in the catalytic mechanism.

It belongs to the transaldolase family. Type 1 subfamily. In terms of assembly, homodimer.

The protein resides in the cytoplasm. It catalyses the reaction D-sedoheptulose 7-phosphate + D-glyceraldehyde 3-phosphate = D-erythrose 4-phosphate + beta-D-fructose 6-phosphate. It participates in carbohydrate degradation; pentose phosphate pathway; D-glyceraldehyde 3-phosphate and beta-D-fructose 6-phosphate from D-ribose 5-phosphate and D-xylulose 5-phosphate (non-oxidative stage): step 2/3. Its function is as follows. Transaldolase is important for the balance of metabolites in the pentose-phosphate pathway. The sequence is that of Transaldolase from Burkholderia pseudomallei (strain 1710b).